Consider the following 248-residue polypeptide: Probable transcriptional regulatory protein FTM_1203 (248 aa).

The protein belongs to the TACO1 family.

The protein localises to the cytoplasm. This is Probable transcriptional regulatory protein FTM_1203 from Francisella tularensis subsp. mediasiatica (strain FSC147).